A 38-amino-acid polypeptide reads, in one-letter code: Photosystem II reaction center protein L (38 aa).

A helical transmembrane segment spans residues 17–37 (SLYWGLLLIFVLAILFSSYIF).

Belongs to the PsbL family. As to quaternary structure, PSII is composed of 1 copy each of membrane proteins PsbA, PsbB, PsbC, PsbD, PsbE, PsbF, PsbH, PsbI, PsbJ, PsbK, PsbL, PsbM, PsbT, PsbX, PsbY, PsbZ, Psb30/Ycf12, at least 3 peripheral proteins of the oxygen-evolving complex and a large number of cofactors. It forms dimeric complexes.

It localises to the plastid. The protein resides in the chloroplast thylakoid membrane. One of the components of the core complex of photosystem II (PSII). PSII is a light-driven water:plastoquinone oxidoreductase that uses light energy to abstract electrons from H(2)O, generating O(2) and a proton gradient subsequently used for ATP formation. It consists of a core antenna complex that captures photons, and an electron transfer chain that converts photonic excitation into a charge separation. This subunit is found at the monomer-monomer interface and is required for correct PSII assembly and/or dimerization. The polypeptide is Photosystem II reaction center protein L (Mesostigma viride (Green alga)).